Consider the following 320-residue polypeptide: ATP-dependent 6-phosphofructokinase (320 aa).

ATP is bound by residues Gly-11, 72-73, and 102-105; these read RY and GDGS. Mg(2+) is bound at residue Asp-103. Residues 125–127, Arg-162, 169–171, Glu-222, Arg-243, and 249–252 each bind substrate; these read TID, MGR, and HMQR. Asp-127 acts as the Proton acceptor in catalysis.

The protein belongs to the phosphofructokinase type A (PFKA) family. ATP-dependent PFK group I subfamily. Prokaryotic clade 'B1' sub-subfamily. As to quaternary structure, homotetramer. It depends on Mg(2+) as a cofactor.

The protein localises to the cytoplasm. It carries out the reaction beta-D-fructose 6-phosphate + ATP = beta-D-fructose 1,6-bisphosphate + ADP + H(+). Its pathway is carbohydrate degradation; glycolysis; D-glyceraldehyde 3-phosphate and glycerone phosphate from D-glucose: step 3/4. With respect to regulation, allosterically activated by ADP and other diphosphonucleosides, and allosterically inhibited by phosphoenolpyruvate. Its function is as follows. Catalyzes the phosphorylation of D-fructose 6-phosphate to fructose 1,6-bisphosphate by ATP, the first committing step of glycolysis. The sequence is that of ATP-dependent 6-phosphofructokinase from Lactiplantibacillus plantarum (strain ATCC BAA-793 / NCIMB 8826 / WCFS1) (Lactobacillus plantarum).